The following is a 155-amino-acid chain: Putative pre-16S rRNA nuclease (155 aa).

This sequence belongs to the YqgF nuclease family.

Its subcellular location is the cytoplasm. Its function is as follows. Could be a nuclease involved in processing of the 5'-end of pre-16S rRNA. This is Putative pre-16S rRNA nuclease from Wolbachia pipientis wMel.